The sequence spans 461 residues: ADP-specific phosphofructokinase (461 aa).

In terms of domain architecture, ADPK spans 1–457; the sequence is MVRELLEKAR…FTSYLAMLKE (457 aa). Mg(2+) contacts are provided by E268, E298, and D441. Residue D441 is the Proton acceptor of the active site.

Belongs to the carbohydrate kinase PfkC family. The cofactor is Mg(2+).

It is found in the cytoplasm. It carries out the reaction beta-D-fructose 6-phosphate + ADP = beta-D-fructose 1,6-bisphosphate + AMP + H(+). Its pathway is carbohydrate degradation; glycolysis. In terms of biological role, catalyzes the phosphorylation of fructose 6-phosphate to fructose 1,6-bisphosphate using ADP as the phosphate donor. The polypeptide is ADP-specific phosphofructokinase (Thermococcus kodakarensis (strain ATCC BAA-918 / JCM 12380 / KOD1) (Pyrococcus kodakaraensis (strain KOD1))).